The following is an 87-amino-acid chain: Ribonuclease P protein component 1 (87 aa).

It belongs to the eukaryotic/archaeal RNase P protein component 1 family. As to quaternary structure, consists of a catalytic RNA component and at least 4-5 protein subunits.

The protein resides in the cytoplasm. It catalyses the reaction Endonucleolytic cleavage of RNA, removing 5'-extranucleotides from tRNA precursor.. Its function is as follows. Part of ribonuclease P, a protein complex that generates mature tRNA molecules by cleaving their 5'-ends. This is Ribonuclease P protein component 1 from Thermoplasma acidophilum (strain ATCC 25905 / DSM 1728 / JCM 9062 / NBRC 15155 / AMRC-C165).